A 457-amino-acid chain; its full sequence is Nucleoprotein (457 aa).

Residues 1–62 form a disordered region; the sequence is MSFVPGQENA…ATTQPNSGSV (62 aa). Residues 9-23 are compositionally biased toward low complexity; sequence NAGSRSSSGNRAGNG. Residues 49-61 show a composition bias toward polar residues; the sequence is PKQTATTQPNSGS. An RNA-binding region spans residues 56 to 197; that stretch reads QPNSGSVVPH…GYYVEGSGRS (142 aa). The CoV N NTD domain maps to 64–193; it reads PHYSWFSGIT…FLPQGYYVEG (130 aa). RNA is bound by residues arginine 109, arginine 125, and arginine 167. Disordered regions lie at residues 158-178, 190-228, 249-290, and 382-429; these read TRTS…IPTR, YVEG…PASI, AGQP…FGKR, and QDGG…VNRE. At serine 170 the chain carries Phosphoserine; by host. Position 177 is a phosphothreonine; by host (threonine 177). Residues 193 to 212 show a composition bias toward low complexity; sequence GSGRSAPASRSGSRSQSRGP. Serine 194 carries the post-translational modification Phosphoserine; by host. Residues 215 to 225 show a composition bias toward polar residues; that stretch reads RARSSSNQRQP. The CoV N CTD domain maps to 260 to 383; it reads AKEVRQKILN…ENLNAYQNQD (124 aa). Residues 267-277 show a composition bias toward basic residues; it reads ILNKPRQKRTP. The interval 267–384 is dimerization; sequence ILNKPRQKRT…NLNAYQNQDG (118 aa). Residue serine 390 is modified to Phosphoserine; by host. At threonine 431 the chain carries Phosphothreonine; by host.

This sequence belongs to the betacoronavirus nucleocapsid protein family. In terms of assembly, homooligomer. Both monomeric and oligomeric forms interact with RNA. Interacts with protein M. Interacts with NSP3; this interaction serves to tether the genome to the newly translated replicase-transcriptase complex at a very early stage of infection. ADP-ribosylated. The ADP-ribosylation is retained in the virion during infection. Post-translationally, phosphorylated on serine and threonine residues.

It is found in the virion. It localises to the host endoplasmic reticulum-Golgi intermediate compartment. The protein resides in the host Golgi apparatus. Packages the positive strand viral genome RNA into a helical ribonucleocapsid (RNP) and plays a fundamental role during virion assembly through its interactions with the viral genome and membrane protein M. Plays an important role in enhancing the efficiency of subgenomic viral RNA transcription as well as viral replication. This chain is Nucleoprotein, found in Puffinus puffinus (Manx shearwater).